The chain runs to 288 residues: ATP synthase gamma chain (288 aa).

This sequence belongs to the ATPase gamma chain family. In terms of assembly, F-type ATPases have 2 components, CF(1) - the catalytic core - and CF(0) - the membrane proton channel. CF(1) has five subunits: alpha(3), beta(3), gamma(1), delta(1), epsilon(1). CF(0) has three main subunits: a, b and c.

Its subcellular location is the cell inner membrane. Its function is as follows. Produces ATP from ADP in the presence of a proton gradient across the membrane. The gamma chain is believed to be important in regulating ATPase activity and the flow of protons through the CF(0) complex. This Rickettsia canadensis (strain McKiel) protein is ATP synthase gamma chain.